A 21-amino-acid chain; its full sequence is Fibrinogen beta chain (21 aa).

Residue glutamine 1 is modified to Pyrrolidone carboxylic acid. The span at 1 to 11 (QFPTDYDEGED) shows a compositional bias: acidic residues. Residues 1–21 (QFPTDYDEGEDDRPKSGLGAR) form a disordered region. Threonine 4 is a glycosylation site (O-linked (GalNAc...) threonine). At tyrosine 6 the chain carries Sulfotyrosine.

Heterohexamer; disulfide linked. Contains 2 sets of 3 non-identical chains (alpha, beta and gamma). The 2 heterotrimers are in head to head conformation with the N-termini in a small central domain. Post-translationally, conversion of fibrinogen to fibrin is triggered by thrombin, which cleaves fibrinopeptides A and B from alpha and beta chains, and thus exposes the N-terminal polymerization sites responsible for the formation of the soft clot.

It localises to the secreted. Its function is as follows. Cleaved by the protease thrombin to yield monomers which, together with fibrinogen alpha (FGA) and fibrinogen gamma (FGG), polymerize to form an insoluble fibrin matrix. Fibrin has a major function in hemostasis as one of the primary components of blood clots. In addition, functions during the early stages of wound repair to stabilize the lesion and guide cell migration during re-epithelialization. Was originally thought to be essential for platelet aggregation, based on in vitro studies using anticoagulated blood. However subsequent studies have shown that it is not absolutely required for thrombus formation in vivo. Enhances expression of SELP in activated platelets. Maternal fibrinogen is essential for successful pregnancy. Fibrin deposition is also associated with infection, where it protects against IFNG-mediated hemorrhage. May also facilitate the antibacterial immune response via both innate and T-cell mediated pathways. The chain is Fibrinogen beta chain (FGB) from Syncerus caffer (African buffalo).